The following is a 465-amino-acid chain: CUGBP Elav-like family member 3 (465 aa).

RRM domains are found at residues 7–88 (IKLF…PADS) and 95–175 (RKLF…FADT). Over residues 346–359 (PPALVAQQPPPPPQ) the composition is skewed to pro residues. The tract at residues 346–379 (PPALVAQQPPPPPQQQQQQQQQQQQQQQREGPDG) is disordered. Positions 360 to 373 (QQQQQQQQQQQQQQ) are enriched in low complexity. An RRM 3 domain is found at 380-458 (CNIFIYHLPQ…KRLKVQLKRP (79 aa)).

It belongs to the CELF/BRUNOL family. As to expression, expressed in brain.

Its subcellular location is the nucleus. The protein localises to the cytoplasm. In terms of biological role, RNA-binding protein involved in the regulation of pre-mRNA alternative splicing. Mediates exon inclusion and/or exclusion in pre-mRNA that are subject to tissue-specific and developmentally regulated alternative splicing. Specifically activates exon 5 inclusion of cardiac isoforms of TNNT2 during heart remodeling at the juvenile to adult transition. Activates the splicing of MAPT/Tau exon 10. Binds to muscle-specific splicing enhancer (MSE) intronic sites flanking the alternative exon 5 of TNNT2 pre-mRNA. The chain is CUGBP Elav-like family member 3 (CELF3) from Homo sapiens (Human).